The sequence spans 476 residues: Cardiolipin synthase (476 aa).

2 helical membrane-spanning segments follow: residues 2 to 22 and 31 to 51; these read HLLINIIFLINIIFIISIIFI and WAWILILTFLPILGFIIYILF. PLD phosphodiesterase domains lie at 207-234 and 389-416; these read INYRNHRKILIIDSKVAFLGGFNIGDEY and EKGFLHAKTIVADSSICSVGTANMDIRS. Residues His-212, Lys-214, Asp-219, His-394, Lys-396, and Asp-401 contribute to the active site.

It belongs to the phospholipase D family. Cardiolipin synthase subfamily.

The protein resides in the cell membrane. It catalyses the reaction 2 a 1,2-diacyl-sn-glycero-3-phospho-(1'-sn-glycerol) = a cardiolipin + glycerol. In terms of biological role, catalyzes the reversible phosphatidyl group transfer from one phosphatidylglycerol molecule to another to form cardiolipin (CL) (diphosphatidylglycerol) and glycerol. The chain is Cardiolipin synthase (cls) from Clostridium perfringens (strain SM101 / Type A).